The following is a 333-amino-acid chain: MNRWGLIGASTIAREWVIGAIRATGGEVVSMMSTSAERGAAYATENGIGKSVTSVEELVGDPDVDAVYVSTTNELHREQTLAAIRAGKHVLCEKPLAMTLEDAREMVVAAREAGVVLGTNHHLRNAAAHRAMRDAIAEGRIGRPIAARVFHAVYLPPHLQGWRLERPEAGGGVILDITVHDADTLRFVLNDDPAEAVAISHSAGMGKEGVEDGVMGGVRFQSGVIAQFHDAFTTKFAETGFEVHGTEGSLIGRNVMTQKPVGTVTLRNAEGESQLPLDPANLYETALAAFHSAIEGHGQPSATGEDGVWSLATGLAVVKAAATGQAAEIETGL.

Residues 9-12, 33-34, Arg38, 71-76, 93-94, Asn120, 162-163, and Tyr283 each bind NADP(+); these read ASTI, ST, TTNELH, EK, and WR.

As to quaternary structure, monomer.

The catalysed reaction is 1,5-anhydro-D-mannitol + NADP(+) = 1,5-anhydro-D-fructose + NADPH + H(+). Functionally, catalyzes the NADPH-specific reduction of 1,5-anhydro-D-fructose to 1,5-anhydro-D-mannitol. Also shows some activity against structurally related compounds such as 3-keto-1,5-anhydro-D-fructose, D-glucosone and D-xylosone. The enzyme cannot use NADH as cosubstrate. The polypeptide is 1,5-anhydro-D-fructose reductase (afr) (Ensifer adhaerens (Sinorhizobium morelense)).